The sequence spans 67 residues: Penaeidin-4d (67 aa).

The signal sequence occupies residues 1–19 (MRLLVCLVFLASFAMVCQG). 3 disulfides stabilise this stretch: Cys-42/Cys-56, Cys-45/Cys-63, and Cys-57/Cys-64. Leu-66 bears the Leucine amide mark.

The protein belongs to the penaeidin family.

It localises to the cytoplasmic granule. Antibacterial and antifungal activity. Presents chitin-binding activity. In Penaeus setiferus (Atlantic white shrimp), this protein is Penaeidin-4d.